A 199-amino-acid chain; its full sequence is MRLTLRQIKWLKVAIWLAAALPFLWLILSVDQGWFSADPAKDIQHFTGRMTLKLLLATLLVTPLARYGKQPLLIRCRRLLGLWCFAWGTLHLVSYSVLELGLSNIGLLGRELVTRPYLTLGIISWLLLLSLAVTSTLWAQRKMGANWQKLHNLVYVVAILAPIHYLWSVKTLSPLPIIYAVTAAILLALRYKKFRQWCR.

A run of 5 helical transmembrane segments spans residues 10–30 (WLKV…ILSV), 79–99 (LLGL…SVLE), 118–138 (LTLG…STLW), 147–167 (WQKL…HYLW), and 169–189 (VKTL…LLAL).

It belongs to the MsrQ family. In terms of assembly, heterodimer of a catalytic subunit (MsrP) and a heme-binding subunit (MsrQ). The cofactor is FMN. It depends on heme b as a cofactor.

The protein localises to the cell inner membrane. Functionally, part of the MsrPQ system that repairs oxidized periplasmic proteins containing methionine sulfoxide residues (Met-O), using respiratory chain electrons. Thus protects these proteins from oxidative-stress damage caused by reactive species of oxygen and chlorine generated by the host defense mechanisms. MsrPQ is essential for the maintenance of envelope integrity under bleach stress, rescuing a wide series of structurally unrelated periplasmic proteins from methionine oxidation. MsrQ provides electrons for reduction to the reductase catalytic subunit MsrP, using the quinone pool of the respiratory chain. The chain is Protein-methionine-sulfoxide reductase heme-binding subunit MsrQ from Yersinia enterocolitica serotype O:8 / biotype 1B (strain NCTC 13174 / 8081).